We begin with the raw amino-acid sequence, 38 residues long: Defensin D7 (38 aa).

This sequence belongs to the DEFL family. Group IV subfamily. As to expression, distributed in the epidermal cell layer of leaves and in the subepidermal layer region of stems. Not in roots.

It is found in the secreted. It localises to the cell wall. Antimicrobial peptide. Active against Fusarium spp., Gram-positive and Gram-negative bacterial pathogens. The polypeptide is Defensin D7 (Spinacia oleracea (Spinach)).